Consider the following 419-residue polypeptide: Lipid II:glycine glycyltransferase (419 aa).

The protein belongs to the FemABX family.

It is found in the cytoplasm. The catalysed reaction is beta-D-GlcNAc-(1-&gt;4)-Mur2Ac(oyl-L-Ala-D-isoglutaminyl-L-Lys-D-Ala-D-Ala)-di-trans,octa-cis-undecaprenyl diphosphate + glycyl-tRNA(Gly) = beta-D-GlcNAc-(1-&gt;4)-Mur2Ac(oyl-L-Ala-D-isoglutaminyl-L-Lys-(N(6)-Gly)-D-Ala-D-Ala)-di-trans,octa-cis-undecaprenyl diphosphate + tRNA(Gly) + H(+). Its function is as follows. Catalyzes the incorporation of amino acid(s) into the interchain peptide bridge of peptidoglycan, using aminoacyl-tRNA as amino acid donor. The protein is Lipid II:glycine glycyltransferase (femX) of Staphylococcus haemolyticus (strain JCSC1435).